The primary structure comprises 175 residues: Adenine phosphoribosyltransferase (175 aa).

Belongs to the purine/pyrimidine phosphoribosyltransferase family. In terms of assembly, homodimer.

It is found in the cytoplasm. It carries out the reaction AMP + diphosphate = 5-phospho-alpha-D-ribose 1-diphosphate + adenine. It participates in purine metabolism; AMP biosynthesis via salvage pathway; AMP from adenine: step 1/1. Functionally, catalyzes a salvage reaction resulting in the formation of AMP, that is energically less costly than de novo synthesis. In Lactobacillus acidophilus (strain ATCC 700396 / NCK56 / N2 / NCFM), this protein is Adenine phosphoribosyltransferase.